The chain runs to 176 residues: ATP-dependent protease subunit HslV (176 aa).

Threonine 2 is an active-site residue. Na(+)-binding residues include glycine 157, cysteine 160, and threonine 163.

The protein belongs to the peptidase T1B family. HslV subfamily. In terms of assembly, a double ring-shaped homohexamer of HslV is capped on each side by a ring-shaped HslU homohexamer. The assembly of the HslU/HslV complex is dependent on binding of ATP.

It localises to the cytoplasm. It carries out the reaction ATP-dependent cleavage of peptide bonds with broad specificity.. Allosterically activated by HslU binding. Protease subunit of a proteasome-like degradation complex believed to be a general protein degrading machinery. This is ATP-dependent protease subunit HslV from Pseudomonas syringae pv. tomato (strain ATCC BAA-871 / DC3000).